The primary structure comprises 271 residues: Thiazole synthase (271 aa).

Lys-95 (schiff-base intermediate with DXP) is an active-site residue. Residues Gly-156, 182 to 183, and 204 to 205 contribute to the 1-deoxy-D-xylulose 5-phosphate site; these read AG and NT.

It belongs to the ThiG family. Homotetramer. Forms heterodimers with either ThiH or ThiS.

It is found in the cytoplasm. The catalysed reaction is [ThiS sulfur-carrier protein]-C-terminal-Gly-aminoethanethioate + 2-iminoacetate + 1-deoxy-D-xylulose 5-phosphate = [ThiS sulfur-carrier protein]-C-terminal Gly-Gly + 2-[(2R,5Z)-2-carboxy-4-methylthiazol-5(2H)-ylidene]ethyl phosphate + 2 H2O + H(+). It functions in the pathway cofactor biosynthesis; thiamine diphosphate biosynthesis. Functionally, catalyzes the rearrangement of 1-deoxy-D-xylulose 5-phosphate (DXP) to produce the thiazole phosphate moiety of thiamine. Sulfur is provided by the thiocarboxylate moiety of the carrier protein ThiS. In vitro, sulfur can be provided by H(2)S. This is Thiazole synthase from Yersinia pestis.